A 148-amino-acid polypeptide reads, in one-letter code: Small ribosomal subunit protein bS6 (148 aa).

A disordered region spans residues 96–148 (HEEGQSAMLTRRDDRRERDGDDRPRRREGGFDRGDRGDRSPRRPRDNEAGEGA).

This sequence belongs to the bacterial ribosomal protein bS6 family.

Binds together with bS18 to 16S ribosomal RNA. In Brucella suis (strain ATCC 23445 / NCTC 10510), this protein is Small ribosomal subunit protein bS6.